We begin with the raw amino-acid sequence, 596 residues long: Germinal center kinase 3 (596 aa).

Low complexity predominate over residues 1 to 54 (MSSSNLAGNTNTTTTSSAASAAAAHSAANASTITSEYSTTQTTTGTFNTDTLSS). The disordered stretch occupies residues 1–80 (MSSSNLAGNT…PPPPPQVSSP (80 aa)). Phosphothreonine; by autocatalysis is present on residues Thr-13 and Thr-32. Pro residues predominate over residues 67–77 (SQPPPPPPPQV). The region spanning 108–386 (YKLDESIGVG…ASELLKYSFF (279 aa)) is the Protein kinase domain. Residues 114-122 (IGVGATATV) and Lys-137 contribute to the ATP site. A Phosphoserine; by autocatalysis modification is found at Ser-190. Asp-240 serves as the catalytic Proton acceptor. Thr-280 is modified (phosphothreonine). Ser-405 carries the phosphoserine; by autocatalysis modification. Ser-419 bears the Phosphoserine mark. Residues 429–496 (NWEFEYDSPQ…EGGGATTPCP (68 aa)) are disordered. Residues 432-450 (FEYDSPQESDDDSDLEDEE) show a composition bias toward acidic residues. The span at 466–479 (GAAGAAGGATGGAA) shows a compositional bias: gly residues.

It belongs to the protein kinase superfamily. STE Ser/Thr protein kinase family. STE20 subfamily. As to quaternary structure, interacts (via C-terminus) with clh-3; required for the phosphorylation-mediated inhibition of clh-3 function. Interacts (via C-terminus) with wnk-1; the interaction is direct. Post-translationally, phosphorylated at Thr-280 and Ser-419 probably by wnk-1; phosphorylation results in weak activation. Predominantly autophosphorylated at Thr-32 and Ser-190 and weakly autophosphorylated at Thr-13 and Ser-405 in vitro. As to expression, ubiquitously expressed with a higher expression in the excretory cell. Expressed in both male and female germ cells; up-regulated in maturing spermatocytes but absent in mature sperm.

It localises to the cytoplasm. The protein resides in the nucleus. The catalysed reaction is L-seryl-[protein] + ATP = O-phospho-L-seryl-[protein] + ADP + H(+). It carries out the reaction L-threonyl-[protein] + ATP = O-phospho-L-threonyl-[protein] + ADP + H(+). Its function is as follows. Plays a role in osmotic stress responses by regulating ion homeostasis and by controlling cell volume via the phosphorylation-mediated inhibition of the chloride channel clh-3. In addition, increases gpdh-1 translation upon osmotic stress, likely downstream of wnk-1. Involved in several developmental processes including the tubular formation of the excretory canals, the formation of the intestine and the progression through larval stages. In addition, required for germ line development by controlling meiosis and chromosomal segregation during spermatogenesis. By controlling clh-3 activity, may regulate the development of the excretory canals and fertility. The protein is Germinal center kinase 3 of Caenorhabditis elegans.